A 236-amino-acid polypeptide reads, in one-letter code: Biosynthetic peptidoglycan transglycosylase (236 aa).

The chain crosses the membrane as a helical span at residues 12 to 31 (ALLWFAAGSVLVVLVLRWVP).

Belongs to the glycosyltransferase 51 family.

It localises to the cell inner membrane. The catalysed reaction is [GlcNAc-(1-&gt;4)-Mur2Ac(oyl-L-Ala-gamma-D-Glu-L-Lys-D-Ala-D-Ala)](n)-di-trans,octa-cis-undecaprenyl diphosphate + beta-D-GlcNAc-(1-&gt;4)-Mur2Ac(oyl-L-Ala-gamma-D-Glu-L-Lys-D-Ala-D-Ala)-di-trans,octa-cis-undecaprenyl diphosphate = [GlcNAc-(1-&gt;4)-Mur2Ac(oyl-L-Ala-gamma-D-Glu-L-Lys-D-Ala-D-Ala)](n+1)-di-trans,octa-cis-undecaprenyl diphosphate + di-trans,octa-cis-undecaprenyl diphosphate + H(+). Its pathway is cell wall biogenesis; peptidoglycan biosynthesis. Its function is as follows. Peptidoglycan polymerase that catalyzes glycan chain elongation from lipid-linked precursors. The polypeptide is Biosynthetic peptidoglycan transglycosylase (Pseudomonas savastanoi pv. phaseolicola (strain 1448A / Race 6) (Pseudomonas syringae pv. phaseolicola (strain 1448A / Race 6))).